Here is a 640-residue protein sequence, read N- to C-terminus: Transcription factor VHR1 (640 aa).

Over residues 118–128 (NVNNSISSNST) the composition is skewed to low complexity. The interval 118–139 (NVNNSISSNSTSDDEISPSIYQ) is disordered. At Ser-409 the chain carries Phosphoserine. A disordered region spans residues 580–640 (NRISKSPMNE…LPQPVFQPLL (61 aa)). The segment covering 588-608 (NEENSNTTLNTGTSTSNTNNN) has biased composition (low complexity). The segment covering 621–631 (KNKNSFQNGNL) has biased composition (polar residues).

This sequence belongs to the VHR1 family.

The protein resides in the cytoplasm. Its subcellular location is the nucleus. In terms of biological role, transcription factor that binds to the VHRE consensus sequence in promoters of VHT1 and BIO5, and regulates their biotin-dependent expression. This Saccharomyces cerevisiae (strain ATCC 204508 / S288c) (Baker's yeast) protein is Transcription factor VHR1 (VHR1).